Here is a 180-residue protein sequence, read N- to C-terminus: dCTP deaminase, dUMP-forming (180 aa).

DCTP contacts are provided by residues 100–105 (RSSLGR), aspartate 117, 125–127 (TLE), glutamine 146, tyrosine 160, and glutamine 167. The active-site Proton donor/acceptor is glutamate 127.

It belongs to the dCTP deaminase family. As to quaternary structure, homotrimer.

It carries out the reaction dCTP + 2 H2O = dUMP + NH4(+) + diphosphate. It functions in the pathway pyrimidine metabolism; dUMP biosynthesis; dUMP from dCTP: step 1/1. Bifunctional enzyme that catalyzes both the deamination of dCTP to dUTP and the hydrolysis of dUTP to dUMP without releasing the toxic dUTP intermediate. The sequence is that of dCTP deaminase, dUMP-forming from Sulfurihydrogenibium sp. (strain YO3AOP1).